We begin with the raw amino-acid sequence, 249 residues long: MYTLVLLRHGESTWNKENRFTGWTDVDLSKDGIVEAGRSGRLLNEAGFTFDLCHTSVLRRAIRTLWIVLDTMDLMYLPVHHSWRLNERHYGALQGLDKRETTEKYGKEQVLLWRRGYAVRPPALAEEDPRHPRFDPRYAGLGPDALPATESLEDTLARVVPYWKNSIAPEVKAGKRILIAAHGNSIRALVKYLDHIPDNEITGLNIPTGFPLVYEIDKDLHPIRHYYLGDPDEIRRATESVADQTSARK.

Substrate contacts are provided by residues 8 to 15, 21 to 22, R60, 87 to 90, K98, 114 to 115, and 183 to 184; these read RHGESTWN, TG, ERHY, RR, and GN. H9 (tele-phosphohistidine intermediate) is an active-site residue. The active-site Proton donor/acceptor is the E87.

The protein belongs to the phosphoglycerate mutase family. BPG-dependent PGAM subfamily.

The enzyme catalyses (2R)-2-phosphoglycerate = (2R)-3-phosphoglycerate. It functions in the pathway carbohydrate degradation; glycolysis; pyruvate from D-glyceraldehyde 3-phosphate: step 3/5. Its function is as follows. Catalyzes the interconversion of 2-phosphoglycerate and 3-phosphoglycerate. This Methanoregula boonei (strain DSM 21154 / JCM 14090 / 6A8) protein is 2,3-bisphosphoglycerate-dependent phosphoglycerate mutase.